The following is a 194-amino-acid chain: Probable chorismate pyruvate-lyase (194 aa).

Substrate contacts are provided by Arg77, Leu115, and Glu176.

It belongs to the UbiC family.

It is found in the cytoplasm. It carries out the reaction chorismate = 4-hydroxybenzoate + pyruvate. It participates in cofactor biosynthesis; ubiquinone biosynthesis. In terms of biological role, removes the pyruvyl group from chorismate, with concomitant aromatization of the ring, to provide 4-hydroxybenzoate (4HB) for the ubiquinone pathway. This is Probable chorismate pyruvate-lyase from Cupriavidus pinatubonensis (strain JMP 134 / LMG 1197) (Cupriavidus necator (strain JMP 134)).